The primary structure comprises 223 residues: Cutinase (223 aa).

The first 19 residues, 1–19 (MKFFAFSMLIGEASPIVLA), serve as a signal peptide directing secretion. Cysteine 46 and cysteine 124 are disulfide-bonded. The active-site Nucleophile is the serine 135. Residues cysteine 185 and cysteine 192 are joined by a disulfide bond. The active site involves aspartate 189. Histidine 202 serves as the catalytic Proton donor/acceptor.

Belongs to the cutinase family. In terms of processing, the 2 disulfide bonds play a critical role in holding the catalytic residues in juxta-position; reduction of the disulfide bridges results in the complete inactivation of the enzyme.

The protein localises to the secreted. The catalysed reaction is cutin + H2O = cutin monomers.. In terms of biological role, catalyzes the hydrolysis of complex carboxylic polyesters found in the cell wall of plants. Degrades cutin, a macromolecule that forms the structure of the plant cuticle. Allows pathogenic fungi to penetrate through the cuticular barrier into the host plant during the initial stage of fungal infection. This chain is Cutinase (CUT), found in Didymella rabiei (Chickpea ascochyta blight fungus).